Here is an 843-residue protein sequence, read N- to C-terminus: MTNSRRHIFERICAKAFQSSLTCSIFGFTVLLILYLLDWKRIAQVPGPNLLKDLEFQRAWNDLEYISSLPHPYNSKQNEHVRSYILKSMRELEATNQSYITVIDDTLTNITFESTDNDTLTYFEGDNILVKFEGKSKDLFPILLSAHFDSVSTGYGATDDGMGVATVMAIARYYAKNQPNRDLIININNAEEDYLFGAKAFASHKLSKNVTAFVNLEGAGSGGKAMLFRSSNGHVSSAYFKGNHYPLASILGNDFFKRGVIRSQTDYIVYEKMHNHTAGLDIAFYENRDIYHTRKDDINHLMPSSLRHMMYTASNAVKNLLNDSKSDLTKFRKPMFFLAFGKYWQLNLPIYQVLNIIFAVICPIVLLLTLIRFPSLYEQLKKPRYTVCFVVSCIFVSIFDTLTVLLLTWINPYVINSHTGLILALFYLTNLIALAFSFRAAATHSKLSSEDLSSIEIVFIWYAQILWYLVFIVSVILSIYFQLGSTYWVTLSYLCTFTCCIMTIIRINYFVDNVVTTQTTHEEDALIGSSINTSSHQHYGSTLNSTPHRRNSIALSNRAHVKLIDNIWTVIYFIFNVPFPVFLCYDILVETILPAGSQTLTDSVFSSKLYKLVIFVVFLSLVNSGPFIFRALSKKSLAVLTMLWITLFVQALSVNPFTESAPLKLSFVQMYDMDRMNNTVYVKNISPFTQDVLSLNPHFLFSNGSCNTSLCYYESTDPDFGGLKTPMSIHIEREKHQLDISINSGSKWCYVDFNTSVFFEAINGNSISGMYSSVRMGQRSFYAPYTLNLTITEVVKAEVTCLYDDIHEGIIPAYNTFVEHLPSWVAGVKASTGLLKVKSSIVI.

Topologically, residues 1 to 16 (MTNSRRHIFERICAKA) are cytoplasmic. A helical membrane pass occupies residues 17–37 (FQSSLTCSIFGFTVLLILYLL). The Vacuolar segment spans residues 38 to 347 (DWKRIAQVPG…LAFGKYWQLN (310 aa)). Asn96, Asn109, and Asn117 each carry an N-linked (GlcNAc...) asparagine glycan. 2 residues coordinate Zn(2+): His147 and Asp159. Glu191 acts as the Proton acceptor in catalysis. Glu192 provides a ligand contact to Zn(2+). N-linked (GlcNAc...) asparagine glycosylation occurs at Asn209. Glu217 provides a ligand contact to Zn(2+). Asn275 carries N-linked (GlcNAc...) asparagine glycosylation. His292 contributes to the Zn(2+) binding site. Asn322 carries N-linked (GlcNAc...) asparagine glycosylation. The helical transmembrane segment at 348–368 (LPIYQVLNIIFAVICPIVLLL) threads the bilayer. At 369 to 386 (TLIRFPSLYEQLKKPRYT) the chain is on the cytoplasmic side. Residues 387 to 407 (VCFVVSCIFVSIFDTLTVLLL) form a helical membrane-spanning segment. Topologically, residues 408–417 (TWINPYVINS) are vacuolar. A helical transmembrane segment spans residues 418-438 (HTGLILALFYLTNLIALAFSF). Topologically, residues 439–456 (RAAATHSKLSSEDLSSIE) are cytoplasmic. The helical transmembrane segment at 457–477 (IVFIWYAQILWYLVFIVSVIL) threads the bilayer. The Vacuolar segment spans residues 478-484 (SIYFQLG). A helical membrane pass occupies residues 485–505 (STYWVTLSYLCTFTCCIMTII). Over 506–566 (RINYFVDNVV…NRAHVKLIDN (61 aa)) the chain is Cytoplasmic. The helical transmembrane segment at 567–587 (IWTVIYFIFNVPFPVFLCYDI) threads the bilayer. At 588–608 (LVETILPAGSQTLTDSVFSSK) the chain is on the vacuolar side. The chain crosses the membrane as a helical span at residues 609 to 629 (LYKLVIFVVFLSLVNSGPFIF). Topologically, residues 630–636 (RALSKKS) are cytoplasmic. The helical transmembrane segment at 637 to 657 (LAVLTMLWITLFVQALSVNPF) threads the bilayer. Topologically, residues 658 to 843 (TESAPLKLSF…LLKVKSSIVI (186 aa)) are vacuolar. Asn677, Asn703, Asn707, Asn754, and Asn788 each carry an N-linked (GlcNAc...) asparagine glycan.

Belongs to the peptidase M28 family. Requires Zn(2+) as cofactor.

It localises to the membrane. Its subcellular location is the vacuole membrane. May be involved in vacuolar sorting and osmoregulation. The protein is Vacuolar membrane protease of Schizosaccharomyces pombe (strain 972 / ATCC 24843) (Fission yeast).